A 245-amino-acid chain; its full sequence is 5-oxoprolinase subunit A (245 aa).

It belongs to the LamB/PxpA family. In terms of assembly, forms a complex composed of PxpA, PxpB and PxpC.

It catalyses the reaction 5-oxo-L-proline + ATP + 2 H2O = L-glutamate + ADP + phosphate + H(+). Functionally, catalyzes the cleavage of 5-oxoproline to form L-glutamate coupled to the hydrolysis of ATP to ADP and inorganic phosphate. This chain is 5-oxoprolinase subunit A, found in Neisseria meningitidis serogroup C (strain 053442).